A 176-amino-acid polypeptide reads, in one-letter code: MAELATIARPYAEALFKASGSDLGAAAAWLDELAAIAANVQLQQFAGNPGVTVTQTFDVISGVAKSQLPDAAKNFLRTVIENGRISVLPEIAAQFRVLKNAQSGSSDATVYSAFPLEGPALADLAATLEKRFGRKLNFAVELEPALIGGVRVVVGDEVLDTSVKARLEQMKVALIS.

This sequence belongs to the ATPase delta chain family. In terms of assembly, F-type ATPases have 2 components, F(1) - the catalytic core - and F(0) - the membrane proton channel. F(1) has five subunits: alpha(3), beta(3), gamma(1), delta(1), epsilon(1). F(0) has three main subunits: a(1), b(2) and c(10-14). The alpha and beta chains form an alternating ring which encloses part of the gamma chain. F(1) is attached to F(0) by a central stalk formed by the gamma and epsilon chains, while a peripheral stalk is formed by the delta and b chains.

Its subcellular location is the cell inner membrane. F(1)F(0) ATP synthase produces ATP from ADP in the presence of a proton or sodium gradient. F-type ATPases consist of two structural domains, F(1) containing the extramembraneous catalytic core and F(0) containing the membrane proton channel, linked together by a central stalk and a peripheral stalk. During catalysis, ATP synthesis in the catalytic domain of F(1) is coupled via a rotary mechanism of the central stalk subunits to proton translocation. Its function is as follows. This protein is part of the stalk that links CF(0) to CF(1). It either transmits conformational changes from CF(0) to CF(1) or is implicated in proton conduction. The sequence is that of ATP synthase subunit delta from Polaromonas sp. (strain JS666 / ATCC BAA-500).